We begin with the raw amino-acid sequence, 441 residues long: Xaa-Pro dipeptidase (441 aa).

Mn(2+)-binding residues include D244, D255, H336, E381, and E420.

The protein belongs to the peptidase M24B family. Bacterial-type prolidase subfamily. It depends on Mn(2+) as a cofactor.

The catalysed reaction is Xaa-L-Pro dipeptide + H2O = an L-alpha-amino acid + L-proline. In terms of biological role, splits dipeptides with a prolyl residue in the C-terminal position. This chain is Xaa-Pro dipeptidase, found in Xanthomonas oryzae pv. oryzae (strain MAFF 311018).